The primary structure comprises 131 residues: Small ribosomal subunit protein uS11 (131 aa).

This sequence belongs to the universal ribosomal protein uS11 family. As to quaternary structure, part of the 30S ribosomal subunit. Interacts with proteins S7 and S18. Binds to IF-3.

Functionally, located on the platform of the 30S subunit, it bridges several disparate RNA helices of the 16S rRNA. Forms part of the Shine-Dalgarno cleft in the 70S ribosome. This Halorhodospira halophila (strain DSM 244 / SL1) (Ectothiorhodospira halophila (strain DSM 244 / SL1)) protein is Small ribosomal subunit protein uS11.